A 75-amino-acid polypeptide reads, in one-letter code: Theromacin (75 aa).

5 cysteine pairs are disulfide-bonded: cysteine 2-cysteine 9, cysteine 24-cysteine 28, cysteine 31-cysteine 73, cysteine 39-cysteine 47, and cysteine 57-cysteine 59.

It belongs to the macin family.

It is found in the secreted. Functionally, has a bactericial activity. The polypeptide is Theromacin (Hirudo medicinalis (Medicinal leech)).